Consider the following 268-residue polypeptide: Tryptophan synthase alpha chain (268 aa).

Active-site proton acceptor residues include E49 and D60.

It belongs to the TrpA family. In terms of assembly, tetramer of two alpha and two beta chains.

It carries out the reaction (1S,2R)-1-C-(indol-3-yl)glycerol 3-phosphate + L-serine = D-glyceraldehyde 3-phosphate + L-tryptophan + H2O. The protein operates within amino-acid biosynthesis; L-tryptophan biosynthesis; L-tryptophan from chorismate: step 5/5. Its function is as follows. The alpha subunit is responsible for the aldol cleavage of indoleglycerol phosphate to indole and glyceraldehyde 3-phosphate. This Escherichia coli (strain ATCC 8739 / DSM 1576 / NBRC 3972 / NCIMB 8545 / WDCM 00012 / Crooks) protein is Tryptophan synthase alpha chain.